We begin with the raw amino-acid sequence, 893 residues long: Pentatricopeptide repeat-containing protein At5g52850, chloroplastic (893 aa).

19 PPR repeats span residues 57–87, 88–122, 123–157, 158–188, 189–223, 224–257, 258–288, 289–323, 324–358, 359–390, 391–425, 426–460, 461–491, 492–526, 527–561, 562–592, 593–627, 628–658, and 664–694; these read NLDLCNNLLSLYLKTDGIWNARKLFDEMSHR, TVFAWTVMISAFTKSQEFASALSLFEEMMASGTHP, NEFTFSSVVRSCAGLRDISYGGRVHGSVIKTGFEG, NSVVGSSLSDLYSKCGQFKEACELFSSLQNA, DTISWTMMISSLVGARKWREALQFYSEMVKAGVPP, NEFTFVKLLGASSFLGLEFGKTIHSNIIVRGIPL, NVVLKTSLVDFYSQFSKMEDAVRVLNSSGEQ, DVFLWTSVVSGFVRNLRAKEAVGTFLEMRSLGLQP, NNFTYSAILSLCSAVRSLDFGKQIHSQTIKVGFED, STDVGNALVDMYMKCSASEVEASRVFGAMVSP, NVVSWTTLILGLVDHGFVQDCFGLLMEMVKREVEP, NVVTLSGVLRACSKLRHVRRVLEIHAYLLRRHVDG, EMVVGNSLVDAYASSRKVDYAWNVIRSMKRR, DNITYTSLVTRFNELGKHEMALSVINYMYGDGIRM, DQLSLPGFISASANLGALETGKHLHCYSVKSGFSG, AASVLNSLVDMYSKCGSLEDAKKVFEEIATP, DVVSWNGLVSGLASNGFISSALSAFEEMRMKETEP, DSVTFLILLSACSNGRLTDLGLEYFQVMKKI, and QVEHYVHLVGILGRAGRLEEATGVVETMHLK. Residues 699-774 form a type E motif region; sequence IFKTLLRACR…KLGKSTVEVQ (76 aa). A type E(+) motif region spans residues 775 to 806; that stretch reads GKVHSFVSEDVTRVDKTNGIYAEIESIKEEIK. The segment at 807–893 is type DYW motif; it reads RFGSPYRGNE…SCKREETSFV (87 aa).

The protein belongs to the PPR family. PCMP-H subfamily.

It is found in the plastid. Its subcellular location is the chloroplast. The polypeptide is Pentatricopeptide repeat-containing protein At5g52850, chloroplastic (PCMP-H31) (Arabidopsis thaliana (Mouse-ear cress)).